The primary structure comprises 63 residues: Conotoxin LeDr243 (63 aa).

The N-terminal stretch at 1 to 22 (MRCLPVFVILLLLIASTPSIDA) is a signal peptide. Positions 23–47 (RPKTKDDMPLASFNDNAKRILQILS) are excised as a propeptide. Cysteine 60 carries the cysteine amide modification. Residues 62–63 (LG) constitute a propeptide that is removed on maturation.

This sequence belongs to the conotoxin T superfamily. Post-translationally, contains 2 disulfide bonds that can be either 'C1-C3, C2-C4' or 'C1-C4, C2-C3', since these disulfide connectivities have been observed for conotoxins with cysteine framework V (for examples, see AC P0DQQ7 and AC P81755). As to expression, expressed by the venom duct.

The protein localises to the secreted. The sequence is that of Conotoxin LeDr243 from Conus litteratus (Lettered cone).